The primary structure comprises 104 residues: MEFCPKCGAVMFPSEGKFKCQCGYEKDITDKLKDKYRVSEEVEAKETIIFTGDDVNTLPTTRVECPKCGNMEAFWWLQQTRRADESETRFFRCTRCKHTWREYD.

Positions 4, 7, 20, 22, 65, 68, 93, and 96 each coordinate Zn(2+). Residues 4–22 (CPKCGAVMFPSEGKFKCQC) form a C4-type zinc finger. The segment at 61–101 (TRVECPKCGNMEAFWWLQQTRRADESETRFFRCTRCKHTWR) adopts a TFIIS-type zinc-finger fold.

The protein belongs to the archaeal RpoM/eukaryotic RPA12/RPB9/RPC11 RNA polymerase family.

Induces RNA cleavage activity in the RNA polymerase. In its presence, the cleavage activity of the RNA polymerase truncates the RNA back to position +15 in a stepwise manner by releasing mainly dinucleotides from the 3'-end of the nascent RNA. The truncated RNAs are able to continue elongation. Involved in transcriptional proofreading and fidelity. Misincorporation of nucleotides during elongation of transcription leads to arrested elongation complexes which are rescued by TFS-promoted removal of a dinucleotide from the 3'-end. TFS is able to induce a cleavage resynthesis cycle in stalled elongation complexes (resulting from the next missing nucleotide or a reduced incorporation rate of a wrong nucleotide) preventing misincorporation and enabling proofreading in a post-incorporation manner. Pausing of elongation complexes is the main determinant of TFS-induced RNA cleavage. The protein is Transcription factor S of Methanothermobacter thermautotrophicus (strain ATCC 29096 / DSM 1053 / JCM 10044 / NBRC 100330 / Delta H) (Methanobacterium thermoautotrophicum).